Reading from the N-terminus, the 498-residue chain is ATP synthase subunit beta, chloroplastic (498 aa).

Residue 172–179 (GGAGVGKT) coordinates ATP.

Belongs to the ATPase alpha/beta chains family. F-type ATPases have 2 components, CF(1) - the catalytic core - and CF(0) - the membrane proton channel. CF(1) has five subunits: alpha(3), beta(3), gamma(1), delta(1), epsilon(1). CF(0) has four main subunits: a(1), b(1), b'(1) and c(9-12).

The protein resides in the plastid. Its subcellular location is the chloroplast thylakoid membrane. It catalyses the reaction ATP + H2O + 4 H(+)(in) = ADP + phosphate + 5 H(+)(out). Its function is as follows. Produces ATP from ADP in the presence of a proton gradient across the membrane. The catalytic sites are hosted primarily by the beta subunits. This is ATP synthase subunit beta, chloroplastic from Hyophorbe lagenicaulis (Bottle palm).